The following is a 155-amino-acid chain: Small ribosomal subunit protein uS9 (155 aa).

This sequence belongs to the universal ribosomal protein uS9 family.

In Rhizobium etli (strain ATCC 51251 / DSM 11541 / JCM 21823 / NBRC 15573 / CFN 42), this protein is Small ribosomal subunit protein uS9.